The chain runs to 448 residues: Protein W (448 aa).

Disordered regions lie at residues lysine 26–aspartate 104 and phenylalanine 193–alanine 406. Polar residues-rich tracts occupy residues tyrosine 28–serine 37 and aspartate 77–arginine 96. Residues serine 240–aspartate 252 are compositionally biased toward acidic residues. Residue serine 257 is modified to Phosphoserine; by host. Over residues phenylalanine 296–lysine 317 the composition is skewed to basic and acidic residues. A Phosphoserine; by host modification is found at serine 350.

This Hendra virus (isolate Horse/Autralia/Hendra/1994) protein is Protein W (P/V/C).